A 1216-amino-acid chain; its full sequence is Histone-lysine N-methyltransferase SETDB1-B (1216 aa).

Residues 38–61 (KADLEQLQEWVEQREKEVADIDAL) adopt a coiled-coil conformation. Tudor domains lie at 266 to 329 (RLFV…LKKT) and 356 to 412 (LLKP…NLKM). The interval 417-513 (SQEKKMAGQQ…QGMPSDLQPK (97 aa)) is disordered. Residues 467 to 478 (PVAPQPAGPPQP) show a composition bias toward pro residues. Residues 482-498 (ESPSFKSQMAKKSTGQL) are compositionally biased toward polar residues. The MBD domain occupies 595–666 (HRGRNPLLTP…EMFCLDPYVL (72 aa)). The Pre-SET domain occupies 728–801 (VGCDCTDGCR…MCTNRLVQHG (74 aa)). Residues Cys730, Cys732, Cys736, Cys742, Cys744, Cys782, Cys786, Cys788, and Cys793 each contribute to the Zn(2+) site. Residues 804-1179 (VRLQLFKTQN…AGTELTWDYN (376 aa)) enclose the SET domain. S-adenosyl-L-methionine contacts are provided by residues 814–816 (KGW), Asp852, and Tyr854. Disordered regions lie at residues 892–944 (LPAS…DTFV), 961–1057 (RRQA…KTQA), and 1081–1108 (KSGGGGAGGGGSGPSHGHGGGGGDNGPK). The span at 918–940 (DSSEESDDEKDDDSNEDDSDSSD) shows a compositional bias: acidic residues. Composition is skewed to basic and acidic residues over residues 966–976 (GLKEESQDSKD) and 983–997 (GEDRKPPHMPEETGK). Positions 1003–1016 (WLTNQSSTSANQSV) are enriched in polar residues. Composition is skewed to basic and acidic residues over residues 1020–1029 (GGIKTEKKDV) and 1046–1055 (DDNKEREKKT). Over residues 1082 to 1105 (SGGGGAGGGGSGPSHGHGGGGGDN) the composition is skewed to gly residues. S-adenosyl-L-methionine contacts are provided by residues Arg1133 and 1136–1137 (NH). 4 residues coordinate Zn(2+): Cys1139, Cys1192, Cys1194, and Cys1199. Positions 1188–1204 (KELLCCCGSTECRGRLL) constitute a Post-SET domain.

It belongs to the class V-like SAM-binding methyltransferase superfamily. Histone-lysine methyltransferase family. Suvar3-9 subfamily.

The protein resides in the nucleus. It localises to the chromosome. The enzyme catalyses L-lysyl(4)-[histone H3] + 3 S-adenosyl-L-methionine = N(6),N(6),N(6)-trimethyl-L-lysyl(4)-[histone H3] + 3 S-adenosyl-L-homocysteine + 3 H(+). In terms of biological role, histone methyltransferase that specifically trimethylates 'Lys-9' of histone H3. H3 'Lys-9' trimethylation represents a specific tag for epigenetic transcriptional repression by recruiting HP1 (CBX1, CBX3 and/or CBX5) proteins to methylated histones. Mainly functions in euchromatin regions, thereby playing a central role in the silencing of euchromatic genes. H3 'Lys-9' trimethylation is coordinated with DNA methylation. Plays a role in promoter hypermethylation and transcriptional silencing of tumor suppressor genes (TSGs) or other tumor-related genes. Also required to maintain a transcriptionally repressive state of genes in undifferentiated embryonic stem cells (ESCs). Associates at promoter regions of tumor suppressor genes (TSGs) leading to their gene silencing. The protein is Histone-lysine N-methyltransferase SETDB1-B (setdb1b) of Danio rerio (Zebrafish).